Consider the following 260-residue polypeptide: Voltage-dependent calcium channel gamma-6 subunit (260 aa).

The next 4 membrane-spanning stretches (helical) occupy residues 43 to 63, 143 to 163, 169 to 189, and 221 to 241; these read LLVAIVGATLAVLAVGTEFWV, VIAVLGLTAMALGCLCVIMVL, SLLRLGAVCFGLSGLLLFVSL, and LGCGVGAGLILLLGGVCFLLL.

Belongs to the PMP-22/EMP/MP20 family. CACNG subfamily. Interacts with CACNA1C. Identified in a complex with the L-type calcium channel subunits CACNA1C, CACNA2D1 and either CACNB1 or CACNB2. As to expression, detected in brain and heart (at protein level).

It is found in the cell membrane. Its function is as follows. Regulates the activity of L-type calcium channels that contain CACNA1C as pore-forming subunit. This chain is Voltage-dependent calcium channel gamma-6 subunit (Cacng6), found in Mus musculus (Mouse).